The chain runs to 573 residues: WRKY transcription factor SUSIBA2 (573 aa).

Disordered regions lie at residues Ala-56–Glu-133 and Pro-157–Tyr-192. The span at Pro-64–Pro-85 shows a compositional bias: basic and acidic residues. Positions Met-108–Met-122 are enriched in low complexity. Polar residues predominate over residues Ser-163–Asn-182. A compositionally biased stretch (basic and acidic residues) spans Val-183–Tyr-192. The segment at residues Val-183–Pro-247 is a DNA-binding region (WRKY 1). Residues Cys-214, Cys-219, His-242, and His-244 each coordinate Zn(2+). The tract at residues Gly-240–Met-332 is disordered. Positions Gly-263–Ser-277 are enriched in basic and acidic residues. Residues Ser-357–Pro-422 constitute a DNA-binding region (WRKY 2). Zn(2+) is bound by residues Cys-388, Cys-393, His-417, and His-419.

The protein belongs to the WRKY group I family. Expressed in endosperm, but not in leaves.

It localises to the nucleus. In terms of biological role, transcription factor involved in starch synthesis. Acts as a transcriptional activator in sugar signaling. Interacts specifically with the SURE and W-box elements, but not with the SP8a element. This Hordeum vulgare (Barley) protein is WRKY transcription factor SUSIBA2.